The chain runs to 64 residues: Beta-insect excitatory toxin OdTx12 (64 aa).

The region spanning 1–59 (QSTGGKAPECLLSNYCNNECTKVHYADKGYCCLLSCYCFGLSDDKKVLEISDSRKKYCD) is the LCN-type CS-alpha/beta domain. 4 disulfide bridges follow: Cys-10–Cys-31, Cys-16–Cys-36, Cys-20–Cys-38, and Cys-32–Cys-58.

The protein belongs to the long (4 C-C) scorpion toxin superfamily. Sodium channel inhibitor family. Beta subfamily. As to expression, expressed by the venom gland.

It is found in the secreted. In terms of biological role, excitatory insect beta-toxins induce a spastic paralysis. They bind voltage-independently at site-4 of sodium channels (Nav) and shift the voltage of activation toward more negative potentials thereby affecting sodium channel activation and promoting spontaneous and repetitive firing. In vivo, this recombinant protein is lethal to Locusta migratoria larvae after injection, but has no significant effect when orally administered. Is not toxic to mice after intracerebroventricular injection. The protein is Beta-insect excitatory toxin OdTx12 of Odontobuthus doriae (Yellow Iranian scorpion).